The chain runs to 382 residues: Flap endonuclease 1-A (382 aa).

The tract at residues 1 to 104 (MGIHGLAKLI…GELAKRSERR (104 aa)) is N-domain. A Mg(2+)-binding site is contributed by Asp-34. Positions 47 and 70 each coordinate DNA. Mg(2+) is bound by residues Asp-86, Glu-158, Glu-160, Asp-179, and Asp-181. Positions 122-253 (NIEKFTKRLV…KRAIDLIRQH (132 aa)) are I-domain. Glu-158 contacts DNA. DNA contacts are provided by Gly-231 and Asp-233. A Mg(2+)-binding site is contributed by Asp-233. Positions 336-344 (TQGRLDDFF) are interaction with PCNA. The tract at residues 350–382 (VSSTKRKEAESKGSAKKKAKTGGTPAGKFKRGK) is disordered.

The protein belongs to the XPG/RAD2 endonuclease family. FEN1 subfamily. Interacts with PCNA. Three molecules of fen1 bind to one PCNA trimer with each molecule binding to one PCNA monomer. PCNA stimulates the nuclease activity without altering cleavage specificity. It depends on Mg(2+) as a cofactor. Post-translationally, phosphorylated. Phosphorylation upon DNA damage induces relocalization to the nuclear plasma.

The protein resides in the nucleus. The protein localises to the nucleolus. Its subcellular location is the nucleoplasm. It localises to the mitochondrion. Structure-specific nuclease with 5'-flap endonuclease and 5'-3' exonuclease activities involved in DNA replication and repair. During DNA replication, cleaves the 5'-overhanging flap structure that is generated by displacement synthesis when DNA polymerase encounters the 5'-end of a downstream Okazaki fragment. It enters the flap from the 5'-end and then tracks to cleave the flap base, leaving a nick for ligation. Also involved in the long patch base excision repair (LP-BER) pathway, by cleaving within the apurinic/apyrimidinic (AP) site-terminated flap. Acts as a genome stabilization factor that prevents flaps from equilibrating into structures that lead to duplications and deletions. Also possesses 5'-3' exonuclease activity on nicked or gapped double-stranded DNA, and exhibits RNase H activity. Also involved in replication and repair of rDNA and in repairing mitochondrial DNA. In Xenopus laevis (African clawed frog), this protein is Flap endonuclease 1-A (fen1-a).